Consider the following 723-residue polypeptide: Transient receptor potential cation channel subfamily V member 5 (723 aa).

At 1–320 (MGVKKPWIQL…SLKWKKYGQP (320 aa)) the chain is on the cytoplasmic side. ANK repeat units follow at residues 72-101 (LGET…YLVT), 110-139 (VGQT…SASA), 156-185 (YGEH…DIRA), 189-222 (LGNT…GDHL), and 232-261 (QGLT…HIQW). Residues 321 to 341 (YFCLLGMLYIFYMICFTTCCV) traverse the membrane as a helical segment. Over 342–378 (YRPLKFRDANRTHVRDNTVLEQKPLQEAYVTYQDKVR) the chain is Extracellular. N-linked (GlcNAc...) asparagine glycosylation occurs at asparagine 351. The chain crosses the membrane as a helical span at residues 379–401 (LVGELVTVIGAVVILLIEIPDIF). Topologically, residues 402–412 (RVGASRYFGHT) are cytoplasmic. Residues 413–435 (VLGGPFHVIIITYASLVLLIMVM) traverse the membrane as a helical segment. At 436-441 (RLTSMN) the chain is on the extracellular side. Residues 442-462 (GEVVPISMALVLGWCSVMYFS) traverse the membrane as a helical segment. Over 463–485 (RGFQMLGPFTIMIQKMIFGDLLR) the chain is Cytoplasmic. A helical membrane pass occupies residues 486–506 (FCWLMAMVILGFASAFYIIFQ). An intramembrane region (pore-forming) is located at residues 517–537 (SDYPTAMFSTFELFLTIIDGP). A Ca(2+)-binding site is contributed by aspartate 535. A helical transmembrane segment spans residues 550–570 (LTYFAFAIIATLLMLNLFIAM). The Cytoplasmic segment spans residues 571–723 (MGDTHWRVAQ…EGDGEEIYHF (153 aa)). Residues 591–595 (VATTV) are interaction with S100A10. Residues 643–646 (AFKS) are involved in Ca(2+)-dependent inactivation. Residues 651 to 674 (EVQEQLSEKQPSGTETGTLARGSV) are disordered. Polar residues predominate over residues 654-667 (EQLSEKQPSGTETG). Threonine 678 bears the Phosphothreonine mark. Position 682 is a phosphoserine (serine 682). The tract at residues 693 to 723 (RGWEILRRNTLGHLNLGQDLGEGDGEEIYHF) is involved in Ca(2+)-dependent inactivation.

This sequence belongs to the transient receptor (TC 1.A.4) family. TrpV subfamily. TRPV5 sub-subfamily. In terms of assembly, homotetramer and probably heterotetramer with TRPV6. Interacts with TRPV6. Interacts with S100A10 and probably with the ANAX2-S100A10 heterotetramer. The interaction with S100A10 is required for the trafficking to the plasma membrane. Interacts with calmodulin. Interacts with BSPRY, which results in its inactivation. Glycosylated. As to expression, detected in kidney (at protein level). Detected in kidney.

The protein localises to the cell membrane. The protein resides in the apical cell membrane. The enzyme catalyses Ca(2+)(in) = Ca(2+)(out). Activated by WNK3. In terms of biological role, constitutively active calcium selective cation channel thought to be involved in Ca(2+) reabsorption in kidney and intestine. Required for normal Ca(2+) reabsorption in the kidney distal convoluted tubules. The channel is activated by low internal calcium level and the current exhibits an inward rectification. A Ca(2+)-dependent feedback regulation includes fast channel inactivation and slow current decay. Heteromeric assembly with TRPV6 seems to modify channel properties. TRPV5-TRPV6 heteromultimeric concatemers exhibit voltage-dependent gating. The protein is Transient receptor potential cation channel subfamily V member 5 (Trpv5) of Rattus norvegicus (Rat).